A 108-amino-acid chain; its full sequence is Circadian clock oscillator protein KaiB (108 aa).

The protein belongs to the KaiB family. Undergoes a major conformational rearrangment; in the free state forms homotetramers with 2 dimers. When bound to the CI domain of KaiC, KaiA or CikA switches to a monomeric thioredoxin-fold (KaiB(fs)). The KaiABC complex composition changes during the circadian cycle to control KaiC phosphorylation. Complexes KaiC(6), KaiA(2-4):KaiC(6), KaiB(6):KaiC(6) and KaiC(6):KaiB(6):KaiA(12) are among the most important forms, many form cooperatively. Binds to KaiA; 1 KaiB(fs) binds to the KaiA homodimer. Binds to the B-loop in the CI domain of KaiC; SasA and KaiB compete to bind to the CI domain. Binding to KaiC CI domain occurs 1:1. KaiA and CikA bind to the same region of KaiB(fs) and therefore compete.

Functionally, key component of the KaiABC oscillator complex, which constitutes the main circadian regulator in cyanobacteria. Its composition changes during the circadian cycle to control KaiC phosphorylation. KaiA stimulates KaiC autophosphorylation, while KaiB sequesters KaiA, leading to KaiC autodephosphorylation. KaiA binding to KaiC yields KaiA(2-4):KaiC(6) complexes which stimulate KaiC autophosphorylation. Phospho-Ser-431 KaiC accumulation triggers binding of KaiB to form the KaiB(6):KaiC(6) complex, leading to changes in the output regulators CikA and SasA. KaiB switches to a thioredoxin-like fold (KaiB(fs)) in complex with KaiC. KaiB(6):KaiC(6) formation exposes a site for KaiA binding that sequesters KaiA from the CII domain, making the KaiC(6):KaiB(6):KaiA(12) complex that results in KaiC autodephosphorylation. Complete dephosphorylation of KaiC leads to dissociation of KaiA(2):KaiB(1), completing 1 cycle of the Kai oscillator. A metamorphic protein which reversibly switches between an inactive tetrameric fold and a rare, thioredoxin-like monomeric fold (KaiB(fs)). KaiB(fs) binds phospho-KaiC, KaiA and CikA. KaiA and CikA compete for binding to KaiB(fs), and KaiB(fs) and SasA compete for binding to KaiC, thus the clock oscillator and output signal pathway are tightly coupled. The sequence is that of Circadian clock oscillator protein KaiB from Thermosynechococcus vestitus (strain NIES-2133 / IAM M-273 / BP-1).